A 405-amino-acid polypeptide reads, in one-letter code: Sesquiterpene synthase 16 (405 aa).

Asp-155, Asp-159, and Glu-309 together coordinate Mg(2+). The DDXXD motif signature appears at 155–159; the sequence is DDTYD.

It belongs to the terpene synthase family. Tpsa subfamily. The cofactor is Mg(2+). It depends on Mn(2+) as a cofactor.

Its pathway is secondary metabolite biosynthesis; terpenoid biosynthesis. In terms of biological role, sesquiterpene synthase involved in the biosynthesis of volatile compounds. No activity detected with geranyl diphosphate (GPP) and farnesyl diphosphate (FPP) as substrates. This Solanum habrochaites (Wild tomato) protein is Sesquiterpene synthase 16.